The chain runs to 252 residues: Probable transcriptional regulatory protein RT0442 (252 aa).

The interval 1-22 is disordered; sequence MSGHSKFKNIQHRKGAQDKKKS.

This sequence belongs to the TACO1 family.

The protein resides in the cytoplasm. The sequence is that of Probable transcriptional regulatory protein RT0442 from Rickettsia typhi (strain ATCC VR-144 / Wilmington).